A 740-amino-acid polypeptide reads, in one-letter code: Pheromone-regulated membrane protein 10 (740 aa).

Disordered stretches follow at residues 1–48, 65–97, and 241–269; these read MGKN…RSGL, FADEDEVVEQDEAAQKTEAVASESSSLADKEEC, and NQPGGQAPQRPGLRKSAQTLSSETLPTGE. Residues 7 to 18 are compositionally biased toward basic and acidic residues; sequence QAAEGEEARRGS. The segment covering 19-33 has biased composition (low complexity); sequence ESSGSSAEPSGAVAE. Positions 67 to 76 are enriched in acidic residues; sequence DEDEVVEQDE. The segment covering 256 to 267 has biased composition (polar residues); that stretch reads SAQTLSSETLPT. The next 10 helical transmembrane spans lie at 422 to 442, 445 to 465, 475 to 495, 499 to 519, 541 to 561, 574 to 594, 599 to 619, 622 to 642, 651 to 671, and 707 to 727; these read AWMCVLLYGFCASMVTPFAFG, WINLVVSFGIGCCVGLLQFIV, VFEITASIVVSFCARALGSIP, ICFGSTVQGSLALILPGYIIL, IIYSLFLGFGITLGAALFGWI, ELSPWFRFIFVPGFALGLSLI, WSQIPVMVCIACSGYVVTYWS, HFTASTEFTASIGAFVIGIMG, GLAMTAMLPGIFVQVPSGIAS, and ITMIQVCIGISVGLFASTLVV.

Belongs to the ThrE exporter (TC 2.A.79) family.

It is found in the membrane. This is Pheromone-regulated membrane protein 10 from Eremothecium gossypii (strain ATCC 10895 / CBS 109.51 / FGSC 9923 / NRRL Y-1056) (Yeast).